The following is a 184-amino-acid chain: Glutathione-regulated potassium-efflux system ancillary protein KefG (184 aa).

Belongs to the NAD(P)H dehydrogenase (quinone) family. KefG subfamily. In terms of assembly, interacts with KefB.

It is found in the cell inner membrane. The catalysed reaction is a quinone + NADH + H(+) = a quinol + NAD(+). It catalyses the reaction a quinone + NADPH + H(+) = a quinol + NADP(+). In terms of biological role, regulatory subunit of a potassium efflux system that confers protection against electrophiles. Required for full activity of KefB. The protein is Glutathione-regulated potassium-efflux system ancillary protein KefG of Erwinia tasmaniensis (strain DSM 17950 / CFBP 7177 / CIP 109463 / NCPPB 4357 / Et1/99).